Here is a 172-residue protein sequence, read N- to C-terminus: RNA silencing suppressor p19 (172 aa).

The span at 1–20 (MERAIQGNDAREQANSERWD) shows a compositional bias: basic and acidic residues. The disordered stretch occupies residues 1 to 37 (MERAIQGNDAREQANSERWDGGSGGTTSPFKLPDESP).

Belongs to the tombusvirus protein p19 family. In terms of assembly, homodimer.

Its function is as follows. Viral suppressor of RNA silencing which binds specifically to silencing RNAs (siRNAs). Acts as a molecular caliper to specifically select siRNAs based on the length of the duplex region of the RNA. This Tomato bushy stunt virus (strain Ja6) (TBSV) protein is RNA silencing suppressor p19.